Here is a 319-residue protein sequence, read N- to C-terminus: Acetyl-coenzyme A carboxylase carboxyl transferase subunit alpha (319 aa).

The 262-residue stretch at 32–293 folds into the CoA carboxyltransferase C-terminal domain; the sequence is NVDIEVRALE…KAVLLNELEA (262 aa).

It belongs to the AccA family. As to quaternary structure, acetyl-CoA carboxylase is a heterohexamer composed of biotin carboxyl carrier protein (AccB), biotin carboxylase (AccC) and two subunits each of ACCase subunit alpha (AccA) and ACCase subunit beta (AccD).

The protein localises to the cytoplasm. It carries out the reaction N(6)-carboxybiotinyl-L-lysyl-[protein] + acetyl-CoA = N(6)-biotinyl-L-lysyl-[protein] + malonyl-CoA. It participates in lipid metabolism; malonyl-CoA biosynthesis; malonyl-CoA from acetyl-CoA: step 1/1. Component of the acetyl coenzyme A carboxylase (ACC) complex. First, biotin carboxylase catalyzes the carboxylation of biotin on its carrier protein (BCCP) and then the CO(2) group is transferred by the carboxyltransferase to acetyl-CoA to form malonyl-CoA. This chain is Acetyl-coenzyme A carboxylase carboxyl transferase subunit alpha, found in Xylella fastidiosa (strain Temecula1 / ATCC 700964).